Consider the following 274-residue polypeptide: MSNKIAILLAVLVAVVACAEAQANQRHRLVRPSPSFSPRPRYAVGQRIVGGFEIDVSDAPYQVSLQYNKRHNCGGSVLSSKWVLTAAHCTAGASPSSLTVRLGTSRHASGGTVVRVARVVQHPKYDSSSIDFDYSLLELEDELTFSDSVQPVGLPKQDETVKDGTMTTVSGWGNTQSAAESNAVLRAANVPTVNQKECNKAYSEFGGVTDRMLCAGYQQGGKDACQGDSGGPLVADGKLVGVVSWGYGCAQAGYPGVYSRVAVVRDWVRENSGV.

An N-terminal signal peptide occupies residues 1 to 18 (MSNKIAILLAVLVAVVAC). Positions 19–47 (AEAQANQRHRLVRPSPSFSPRPRYAVGQR) are cleaved as a propeptide — activation peptide. A Peptidase S1 domain is found at 48 to 273 (IVGGFEIDVS…VRDWVRENSG (226 aa)). C73 and C89 form a disulfide bridge. Catalysis depends on charge relay system residues H88 and D133. 2 disulfides stabilise this stretch: C198/C214 and C225/C249. The Charge relay system role is filled by S229.

The protein belongs to the peptidase S1 family. Constitutively expressed at low level in the gut of adult females. Also expressed in the gut of male and female pupae.

The protein resides in the secreted. The enzyme catalyses Preferential cleavage: Arg-|-Xaa, Lys-|-Xaa.. Its function is as follows. Major function may be to aid in digestion of the blood meal. The protein is Trypsin-1 (TRYP1) of Anopheles gambiae (African malaria mosquito).